Here is a 590-residue protein sequence, read N- to C-terminus: ATP-dependent zinc metalloprotease FtsH 1 (590 aa).

Over 1 to 8 the chain is Cytoplasmic; it reads MLKLTKKQ. A helical membrane pass occupies residues 9 to 29; sequence LIIVLGIAIVVVSAIGYAVYT. Residues 30-103 are Extracellular-facing; the sequence is QYFNEDKLEI…QVRETTDQYS (74 aa). Residues 104-124 traverse the membrane as a helical segment; that stretch reads VVQVITFVVLIGGFIGVAIFL. Over 125-590 the chain is Cytoplasmic; the sequence is SKKNATQTSK…NEIFSGFQSM (466 aa). 195–202 lines the ATP pocket; that stretch reads GSPGTGKT. His418 serves as a coordination point for Zn(2+). Glu419 is a catalytic residue. Residues His422 and Asp496 each contribute to the Zn(2+) site.

In the central section; belongs to the AAA ATPase family. It in the C-terminal section; belongs to the peptidase M41 family. As to quaternary structure, homohexamer. Zn(2+) serves as cofactor.

The protein localises to the cell membrane. Acts as a processive, ATP-dependent zinc metallopeptidase for both cytoplasmic and membrane proteins. Plays a role in the quality control of integral membrane proteins. This chain is ATP-dependent zinc metalloprotease FtsH 1, found in Alkaliphilus metalliredigens (strain QYMF).